Here is a 389-residue protein sequence, read N- to C-terminus: Aspartate aminotransferase (389 aa).

Residues glycine 34 and asparagine 171 each coordinate L-aspartate. Residue lysine 233 is modified to N6-(pyridoxal phosphate)lysine. Residue arginine 362 coordinates L-aspartate.

Belongs to the class-I pyridoxal-phosphate-dependent aminotransferase family. Homodimer. Pyridoxal 5'-phosphate is required as a cofactor.

The protein resides in the cytoplasm. It catalyses the reaction L-aspartate + 2-oxoglutarate = oxaloacetate + L-glutamate. In Pyrococcus abyssi (strain GE5 / Orsay), this protein is Aspartate aminotransferase (aspC).